The chain runs to 193 residues: Ion-translocating oxidoreductase complex subunit A (193 aa).

6 helical membrane passes run 5 to 25, 39 to 59, 67 to 87, 102 to 122, 134 to 154, and 171 to 191; these read LLLLIGTVLVNNFVLVKFLGL, IGMGLATTFVLTLASVCAYLV, LGIEYLRTMSFILVIAVVVQF, LLGIFLPLITTNCAVLGVALL, IIYGFGAAVGFSLVLILFASM, and SIAMITAGLMSLAFMGFTGLV.

This sequence belongs to the NqrDE/RnfAE family. As to quaternary structure, the complex is composed of six subunits: RnfA, RnfB, RnfC, RnfD, RnfE and RnfG.

It localises to the cell inner membrane. Functionally, part of a membrane-bound complex that couples electron transfer with translocation of ions across the membrane. The sequence is that of Ion-translocating oxidoreductase complex subunit A from Vibrio cholerae serotype O1 (strain ATCC 39315 / El Tor Inaba N16961).